The chain runs to 556 residues: Set1/Ash2 histone methyltransferase complex subunit ASH2 (556 aa).

Residues 1–19 (MEDSQMDTSSPTESSSEVN) are compositionally biased toward polar residues. The disordered stretch occupies residues 1–27 (MEDSQMDTSSPTESSSEVNFTAEEDKS). The PHD-type zinc finger occupies 34–90 (AGVCYCGKERNLNIVELLCATCSRWVHETCVSYQLGKGKLLPFITNYVFVCKNCSAS). 8 residues coordinate Zn(2+): cysteine 37, cysteine 39, cysteine 52, cysteine 55, histidine 60, cysteine 63, cysteine 84, and cysteine 87. Residues 216–251 (ASLSKNNRQKRKFPGTDSGPTGKKGRPSSDITANVK) form a disordered region. Positions 288–510 (SSDWAGKPIP…VSVNFGPAFK (223 aa)) constitute a B30.2/SPRY domain.

In terms of assembly, core component of several methyltransferase-containing complexes. Component of the SET1C/COMPASS complex, composed at least of the catalytic subunit Set1, wds/WDR5, Wdr82, Rbbp5, ash2, Cfp1/CXXC1, hcf and Dpy-30L1. Component of the MLL3/4 (Histone-lysine N-methyltransferase/demethylase TRR) complex composed at least of the catalytic subunit trr, ash2, Rbbp5, Dpy-30L1, wds, hcf, ptip, Pa1, Utx, Lpt and Ncoa6. Interacts with hcf. Interacts with trr. As to quaternary structure, interacts (via B30.2/SPRY domain) with sktl; the interaction is direct. As to expression, in larvae and pupae, expressed in imaginal disks, salivary gland and fat body cells. No expression detected in central nervous system (at protein level).

Its subcellular location is the nucleus. The protein localises to the chromosome. In terms of biological role, transcriptional regulator. Regulates a number of genes involved in wing development including activation of net and bs and repression of rho and kni and controls vein-intervein patterning during wing development. Required for correct expression of a number of homeotic genes including Scr in the first leg imaginal disk and Ubx in the third leg imaginal disk and haltere disks. Required for stabilization of the histone-lysine N-methyltransferase trr and for trimethylation of 'Lys-4' of histone H3. Together with sktl probably plays a role in maintenance of transcriptionally active chromatin through down-regulation of histone H1 hyperphosphorylation. The sequence is that of Set1/Ash2 histone methyltransferase complex subunit ASH2 from Drosophila melanogaster (Fruit fly).